A 70-amino-acid chain; its full sequence is Kappa-scoloptoxin(07)-Ssm2b (70 aa).

Residues Met-1–Gly-19 form the signal peptide. Residues Ala-20 to Arg-39 constitute a propeptide that is removed on maturation.

It belongs to the scoloptoxin-07 family. Contains 3 disulfide bonds. Expressed by the venom gland.

It is found in the secreted. Functionally, inhibits voltage-gated potassium channels. The protein is Kappa-scoloptoxin(07)-Ssm2b of Scolopendra mutilans (Chinese red-headed centipede).